The chain runs to 150 residues: Putative solute carrier family 19 member 4 (150 aa).

The disordered stretch occupies residues 118-137; it reads PSVREGACNEKSTENKKPQD. Residues 124-136 show a composition bias toward basic and acidic residues; the sequence is ACNEKSTENKKPQ.

This sequence belongs to the reduced folate carrier (RFC) transporter (TC 2.A.48) family.

This is Putative solute carrier family 19 member 4 from Homo sapiens (Human).